Reading from the N-terminus, the 830-residue chain is Venom phosphodiesterase (830 aa).

2 SMB domains span residues 7 to 50 and 51 to 95; these read PLES…VLPT and QSWS…RETS. Intrachain disulfides connect Cys-11–Cys-15, Cys-11–Cys-28, Cys-15–Cys-46, Cys-26–Cys-28, Cys-26–Cys-39, Cys-32–Cys-38, Cys-39–Cys-46, Cys-55–Cys-60, Cys-55–Cys-72, Cys-60–Cys-90, Cys-70–Cys-72, Cys-70–Cys-83, Cys-76–Cys-82, Cys-83–Cys-90, Cys-101–Cys-147, and Cys-109–Cys-321. N-linked (GlcNAc...) asparagine glycosylation occurs at Asn-16. The short motif at 35–37 is the Cell attachment site element; that stretch reads RKA. Residues Asp-124 and Thr-162 each contribute to the a divalent metal cation site. The active-site AMP-threonine intermediate is the Thr-162. N-linked (GlcNAc...) asparagine glycans are attached at residues Asn-193, Asn-236, and Asn-247. Lys-248 contributes to the AMP binding site. A divalent metal cation-binding residues include Asp-282, His-286, Asp-329, and His-330. Residue His-286 coordinates AMP. Disulfide bonds link Cys-337/Cys-434, Cys-385/Cys-772, Cys-518/Cys-575, Cys-531/Cys-632, Cys-533/Cys-617, and Cys-740/Cys-750. His-439 is an a divalent metal cation binding site. Asn-489 is a glycosylation site (N-linked (GlcNAc...) asparagine). N-linked (GlcNAc...) asparagine glycans are attached at residues Asn-723 and Asn-742.

Belongs to the nucleotide pyrophosphatase/phosphodiesterase family. Monomer cleaved in two subunits; disulfide-linked. Is synthesized as a single-chain protein and is subsequently cleaved to form a two-subunit protein held together with disulfide bonds. Requires a divalent metal cation as cofactor. As to expression, expressed by venom gland.

The protein resides in the secreted. The enzyme catalyses ADP + H2O = AMP + phosphate + H(+). Hydrolyzes ADP with high activity. Shows weak or no activity on 5'-AMP, 5'-GMP, 3'-AMP, ATP, cAMP, and cGMP. Is devoid of monophosphatase and proteinase activities. Dose-dependently inhibits platelet aggregation induced by ADP and collagen. This Naja atra (Chinese cobra) protein is Venom phosphodiesterase.